Here is a 194-residue protein sequence, read N- to C-terminus: Peptidyl-tRNA hydrolase (194 aa).

Y16 is a tRNA binding site. The active-site Proton acceptor is H21. TRNA contacts are provided by F67, N69, and N115.

Belongs to the PTH family. Monomer.

It localises to the cytoplasm. It catalyses the reaction an N-acyl-L-alpha-aminoacyl-tRNA + H2O = an N-acyl-L-amino acid + a tRNA + H(+). In terms of biological role, hydrolyzes ribosome-free peptidyl-tRNAs (with 1 or more amino acids incorporated), which drop off the ribosome during protein synthesis, or as a result of ribosome stalling. Catalyzes the release of premature peptidyl moieties from peptidyl-tRNA molecules trapped in stalled 50S ribosomal subunits, and thus maintains levels of free tRNAs and 50S ribosomes. This chain is Peptidyl-tRNA hydrolase, found in Colwellia psychrerythraea (strain 34H / ATCC BAA-681) (Vibrio psychroerythus).